The chain runs to 345 residues: Fibronectin type 3 and ankyrin repeat domains protein 1 (345 aa).

Positions P8–P108 constitute a Fibronectin type-III domain. 6 ANK repeats span residues I109–V139, F143–L172, S176–A205, G209–V238, S243–V273, and N277–V306.

In terms of assembly, interacts with COPS5; regulates the phosphorylation of JUN and the transcriptional activity of AP-1. Interacts with RYBP; may prevent the ubiquitin-mediated proteasomal degradation of FANK1. Polyubiquitinated. Polyubiquitination leads to proteasomal degradation. As to expression, mostly restricted to testis.

The protein resides in the nucleus. It localises to the cytoplasm. Its subcellular location is the cytosol. The protein localises to the cytoskeleton. It is found in the cilium basal body. The protein resides in the cell projection. It localises to the cilium. Functionally, through the activation of JUN and AP-1-mediated transcription, may regulate apoptosis. The protein is Fibronectin type 3 and ankyrin repeat domains protein 1 of Homo sapiens (Human).